A 785-amino-acid polypeptide reads, in one-letter code: Semaphorin-3F (785 aa).

Positions 1–18 are cleaved as a signal peptide; sequence MLVTAFILWASLLTGAWP. Residues 31–545 enclose the Sema domain; the sequence is RVRLSFKELK…SAVGVTHLSL (515 aa). A glycan (N-linked (GlcNAc...) asparagine) is linked at asparagine 53. A disulfide bond links cysteine 104 and cysteine 115. Residue asparagine 126 is glycosylated (N-linked (GlcNAc...) asparagine). Disulfide bonds link cysteine 133-cysteine 142, cysteine 300-cysteine 412, cysteine 324-cysteine 372, and cysteine 548-cysteine 566. Residues 583-602 are disordered; it reads RSRRQDVRHGNPIRQCRGFN. The Ig-like C2-type domain maps to 605-695; that stretch reads ANKNAVESVQ…KHIVTRVQLH (91 aa). An intrachain disulfide couples cysteine 678 to cysteine 746. Residues 753–785 are disordered; the sequence is VPPRPREAPGALRPPELQDQKKPRNRRHHPPDT. A compositionally biased stretch (basic residues) spans 775 to 785; that stretch reads PRNRRHHPPDT.

It belongs to the semaphorin family. Expressed ubiquitously in adulthood. During embryogenesis, expressed in subregions of the central nervous system and various other tissues like skin, kidney, lung and intestine.

The protein localises to the secreted. The protein is Semaphorin-3F (Sema3f) of Mus musculus (Mouse).